The primary structure comprises 350 residues: S-adenosylmethionine:tRNA ribosyltransferase-isomerase (350 aa).

Belongs to the QueA family. In terms of assembly, monomer.

It localises to the cytoplasm. The catalysed reaction is 7-aminomethyl-7-carbaguanosine(34) in tRNA + S-adenosyl-L-methionine = epoxyqueuosine(34) in tRNA + adenine + L-methionine + 2 H(+). Its pathway is tRNA modification; tRNA-queuosine biosynthesis. Functionally, transfers and isomerizes the ribose moiety from AdoMet to the 7-aminomethyl group of 7-deazaguanine (preQ1-tRNA) to give epoxyqueuosine (oQ-tRNA). This chain is S-adenosylmethionine:tRNA ribosyltransferase-isomerase, found in Vibrio parahaemolyticus serotype O3:K6 (strain RIMD 2210633).